A 74-amino-acid polypeptide reads, in one-letter code: Sec-independent protein translocase protein TatA (74 aa).

A helical transmembrane segment spans residues 1-21; sequence MGGISIWQLLIIVAIVVLLFG. The tract at residues 45–74 is disordered; sequence EEPKDAEFKSLDKAENTAQTKKEEKEKEQA.

It belongs to the TatA/E family. As to quaternary structure, the Tat system comprises two distinct complexes: a TatABC complex, containing multiple copies of TatA, TatB and TatC subunits, and a separate TatA complex, containing only TatA subunits. Substrates initially bind to the TatABC complex, which probably triggers association of the separate TatA complex to form the active translocon.

It is found in the cell inner membrane. Part of the twin-arginine translocation (Tat) system that transports large folded proteins containing a characteristic twin-arginine motif in their signal peptide across membranes. TatA could form the protein-conducting channel of the Tat system. The sequence is that of Sec-independent protein translocase protein TatA from Actinobacillus succinogenes (strain ATCC 55618 / DSM 22257 / CCUG 43843 / 130Z).